A 219-amino-acid chain; its full sequence is MRLILISHSRLFALSALFLIPTFDSLSAENTLTDSTTLIDRTTQSDSTTQRDSKTRRDPAPSFWQRASNNLSETWQHPQSQDLYVPAITWHNRWTYDRAKTDKYNERPWGAGFGVSRLDSDGDWHALYVMAFKDSFNKWEPIGGYGYEKRWRPLENQDIQFGLGFTAGVTMRDNWHYIPIPVLLPLASVSYQRLSFQATYIPGTYNNGNVFFAWLRWQF.

Positions 1–28 are cleaved as a signal peptide; sequence MRLILISHSRLFALSALFLIPTFDSLSA. Residues 39-63 are disordered; it reads IDRTTQSDSTTQRDSKTRRDPAPSF. Positions 49–59 are enriched in basic and acidic residues; it reads TQRDSKTRRDP. Catalysis depends on residues His-91, Asp-134, and Ser-135.

Belongs to the lipid A palmitoyltransferase family. Homodimer.

It is found in the cell outer membrane. The catalysed reaction is a lipid A + a 1,2-diacyl-sn-glycero-3-phosphocholine = a hepta-acyl lipid A + a 2-acyl-sn-glycero-3-phosphocholine. The enzyme catalyses a lipid IVA + a 1,2-diacyl-sn-glycero-3-phosphocholine = a lipid IVB + a 2-acyl-sn-glycero-3-phosphocholine. It carries out the reaction a lipid IIA + a 1,2-diacyl-sn-glycero-3-phosphocholine = a lipid IIB + a 2-acyl-sn-glycero-3-phosphocholine. Functionally, transfers a fatty acid residue from the sn-1 position of a phospholipid to the N-linked hydroxyfatty acid chain on the proximal unit of lipid A or its precursors. This is Lipid A acyltransferase PagP from Dickeya zeae (strain Ech586) (Dickeya dadantii (strain Ech586)).